The sequence spans 216 residues: Cytochrome c oxidase subunit 2 (216 aa).

The Mitochondrial intermembrane segment spans residues 1–8 (LGLQNATS). A helical membrane pass occupies residues 9–39 (PIMEELIAFHDHALMIIFLISSLVLYIISLM). The Mitochondrial matrix portion of the chain corresponds to 40–53 (LTTKLTHTSTMNAQ). The chain crosses the membrane as a helical span at residues 54-81 (EIEMIWTILPAVILIMIALPSLRILYMT). Over 82 to 216 (DEFNKPYLTL…FIYFQDFEVW (135 aa)) the chain is Mitochondrial intermembrane. Cu cation is bound by residues His155, Cys190, Glu192, Cys194, His198, and Met201. Glu192 provides a ligand contact to Mg(2+).

It belongs to the cytochrome c oxidase subunit 2 family. In terms of assembly, component of the cytochrome c oxidase (complex IV, CIV), a multisubunit enzyme composed of 14 subunits. The complex is composed of a catalytic core of 3 subunits MT-CO1, MT-CO2 and MT-CO3, encoded in the mitochondrial DNA, and 11 supernumerary subunits COX4I, COX5A, COX5B, COX6A, COX6B, COX6C, COX7A, COX7B, COX7C, COX8 and NDUFA4, which are encoded in the nuclear genome. The complex exists as a monomer or a dimer and forms supercomplexes (SCs) in the inner mitochondrial membrane with NADH-ubiquinone oxidoreductase (complex I, CI) and ubiquinol-cytochrome c oxidoreductase (cytochrome b-c1 complex, complex III, CIII), resulting in different assemblies (supercomplex SCI(1)III(2)IV(1) and megacomplex MCI(2)III(2)IV(2)). Found in a complex with TMEM177, COA6, COX18, COX20, SCO1 and SCO2. Interacts with TMEM177 in a COX20-dependent manner. Interacts with COX20. Interacts with COX16. The cofactor is Cu cation.

It is found in the mitochondrion inner membrane. The catalysed reaction is 4 Fe(II)-[cytochrome c] + O2 + 8 H(+)(in) = 4 Fe(III)-[cytochrome c] + 2 H2O + 4 H(+)(out). In terms of biological role, component of the cytochrome c oxidase, the last enzyme in the mitochondrial electron transport chain which drives oxidative phosphorylation. The respiratory chain contains 3 multisubunit complexes succinate dehydrogenase (complex II, CII), ubiquinol-cytochrome c oxidoreductase (cytochrome b-c1 complex, complex III, CIII) and cytochrome c oxidase (complex IV, CIV), that cooperate to transfer electrons derived from NADH and succinate to molecular oxygen, creating an electrochemical gradient over the inner membrane that drives transmembrane transport and the ATP synthase. Cytochrome c oxidase is the component of the respiratory chain that catalyzes the reduction of oxygen to water. Electrons originating from reduced cytochrome c in the intermembrane space (IMS) are transferred via the dinuclear copper A center (CU(A)) of subunit 2 and heme A of subunit 1 to the active site in subunit 1, a binuclear center (BNC) formed by heme A3 and copper B (CU(B)). The BNC reduces molecular oxygen to 2 water molecules using 4 electrons from cytochrome c in the IMS and 4 protons from the mitochondrial matrix. The polypeptide is Cytochrome c oxidase subunit 2 (MT-CO2) (Callimico goeldii (Goeldi's marmoset)).